The primary structure comprises 506 residues: Maturase K (506 aa).

This sequence belongs to the intron maturase 2 family. MatK subfamily.

It localises to the plastid. The protein localises to the chloroplast. Its function is as follows. Usually encoded in the trnK tRNA gene intron. Probably assists in splicing its own and other chloroplast group II introns. In Calluna vulgaris (Heather), this protein is Maturase K.